The following is a 488-amino-acid chain: Glutamyl-tRNA(Gln) amidotransferase subunit A (488 aa).

Active-site charge relay system residues include Lys77 and Ser152. Residue Ser176 is the Acyl-ester intermediate of the active site.

The protein belongs to the amidase family. GatA subfamily. As to quaternary structure, heterotrimer of A, B and C subunits.

It catalyses the reaction L-glutamyl-tRNA(Gln) + L-glutamine + ATP + H2O = L-glutaminyl-tRNA(Gln) + L-glutamate + ADP + phosphate + H(+). Allows the formation of correctly charged Gln-tRNA(Gln) through the transamidation of misacylated Glu-tRNA(Gln) in organisms which lack glutaminyl-tRNA synthetase. The reaction takes place in the presence of glutamine and ATP through an activated gamma-phospho-Glu-tRNA(Gln). The sequence is that of Glutamyl-tRNA(Gln) amidotransferase subunit A from Streptococcus equi subsp. zooepidemicus (strain H70).